Here is a 265-residue protein sequence, read N- to C-terminus: Apolipoprotein A-I (265 aa).

The N-terminal stretch at 1-18 (MKAVVLAVAALFLAGGEA) is a signal peptide. 2 consecutive repeat copies span residues 68 to 89 (LKLTENLDTLSSTFSKLREQLG) and 90 to 111 (PVTQEFWQNLEKDTEWLRQEMN). A 10 X approximate tandem repeats region spans residues 68–265 (LKLTENLDTL…EEASKKLSSQ (198 aa)). At M110 the chain carries Methionine sulfoxide. The 3; half-length repeat unit spans residues 112–122 (KDLADMKQKVQ). Tandem repeats lie at residues 123–144 (PYMEQFQKTWQEEVERYRQKVE), 145–166 (PLSTELREGARQKLQELQEKLA), and 167–188 (PLGADLRDSARVHVDALRTQLA). The 7; truncated repeat unit spans residues 189–208 (PYSEQMRERLAERLAALRDS). M194 carries the methionine sulfoxide modification. Residues 209-230 (PSLAEYQAKAHEHLKTLHEKAQ) form repeat 8. A 9; half-length repeat occupies 231 to 241 (PALSDLGQGVL). Repeat 10 spans residues 242-265 (PVLESLKATLVGAIEEASKKLSSQ).

Belongs to the apolipoprotein A1/A4/E family. Homodimer. Interacts with APOA1BP and CLU. Component of a sperm activating protein complex (SPAP), consisting of APOA1, an immunoglobulin heavy chain, an immunoglobulin light chain and albumin. Interacts with NDRG1. Interacts with SCGB3A2. Interacts with NAXE and YJEFN3. In terms of processing, glycosylated. Post-translationally, palmitoylated. Phosphorylation sites are present in the extracellular medium.

The protein localises to the secreted. Its function is as follows. Participates in the reverse transport of cholesterol from tissues to the liver for excretion by promoting cholesterol efflux from tissues and by acting as a cofactor for the lecithin cholesterol acyltransferase (LCAT). As part of the SPAP complex, activates spermatozoa motility. This is Apolipoprotein A-I (Apoa1) from Dipodomys ordii (Ord's kangaroo rat).